Reading from the N-terminus, the 457-residue chain is GTPase Der (457 aa).

EngA-type G domains lie at 4–169 (PTIA…PENN) and 177–352 (IMMS…NQHR). GTP is bound by residues 10–17 (GRPNVGKS), 57–61 (DTGGL), 120–123 (NKCE), 183–190 (GRPNVGKS), 230–234 (DTAGI), and 295–298 (NKWD). Residues 353–438 (RRVTTSVVNE…PLILLWRGKQ (86 aa)) form the KH-like domain.

This sequence belongs to the TRAFAC class TrmE-Era-EngA-EngB-Septin-like GTPase superfamily. EngA (Der) GTPase family. As to quaternary structure, associates with the 50S ribosomal subunit.

GTPase that plays an essential role in the late steps of ribosome biogenesis. The polypeptide is GTPase Der (Prochlorococcus marinus (strain AS9601)).